We begin with the raw amino-acid sequence, 308 residues long: Ribosomal RNA small subunit methyltransferase H (308 aa).

S-adenosyl-L-methionine contacts are provided by residues 35–37 (GGH), aspartate 54, phenylalanine 80, aspartate 101, and glutamine 108.

Belongs to the methyltransferase superfamily. RsmH family.

Its subcellular location is the cytoplasm. The catalysed reaction is cytidine(1402) in 16S rRNA + S-adenosyl-L-methionine = N(4)-methylcytidine(1402) in 16S rRNA + S-adenosyl-L-homocysteine + H(+). In terms of biological role, specifically methylates the N4 position of cytidine in position 1402 (C1402) of 16S rRNA. This chain is Ribosomal RNA small subunit methyltransferase H, found in Mycoplasma pneumoniae (strain ATCC 29342 / M129 / Subtype 1) (Mycoplasmoides pneumoniae).